Consider the following 79-residue polypeptide: Sulfur carrier protein TusA (79 aa).

Cysteine 17 (cysteine persulfide intermediate) is an active-site residue.

The protein belongs to the sulfur carrier protein TusA family.

It is found in the cytoplasm. Sulfur carrier protein which probably makes part of a sulfur-relay system. This chain is Sulfur carrier protein TusA, found in Actinobacillus pleuropneumoniae serotype 7 (strain AP76).